The chain runs to 412 residues: Multifunctional CCA protein (412 aa).

Residues Gly8 and Arg11 each coordinate ATP. Gly8 and Arg11 together coordinate CTP. Residues Asp21 and Asp23 each contribute to the Mg(2+) site. ATP-binding residues include Arg91, Arg137, and Arg140. The CTP site is built by Arg91, Arg137, and Arg140. In terms of domain architecture, HD spans 228 to 329 (TGIHTLMTLS…VKLFDSIDAW (102 aa)).

The protein belongs to the tRNA nucleotidyltransferase/poly(A) polymerase family. Bacterial CCA-adding enzyme type 1 subfamily. Monomer. Can also form homodimers and oligomers. Mg(2+) is required as a cofactor. It depends on Ni(2+) as a cofactor.

The enzyme catalyses a tRNA precursor + 2 CTP + ATP = a tRNA with a 3' CCA end + 3 diphosphate. It catalyses the reaction a tRNA with a 3' CCA end + 2 CTP + ATP = a tRNA with a 3' CCACCA end + 3 diphosphate. In terms of biological role, catalyzes the addition and repair of the essential 3'-terminal CCA sequence in tRNAs without using a nucleic acid template. Adds these three nucleotides in the order of C, C, and A to the tRNA nucleotide-73, using CTP and ATP as substrates and producing inorganic pyrophosphate. tRNA 3'-terminal CCA addition is required both for tRNA processing and repair. Also involved in tRNA surveillance by mediating tandem CCA addition to generate a CCACCA at the 3' terminus of unstable tRNAs. While stable tRNAs receive only 3'-terminal CCA, unstable tRNAs are marked with CCACCA and rapidly degraded. In Escherichia coli O7:K1 (strain IAI39 / ExPEC), this protein is Multifunctional CCA protein.